We begin with the raw amino-acid sequence, 216 residues long: uncharacterized protein (216 aa).

The N-terminal stretch at 1–17 (MLKKIIILFLGMFLLSA) is a signal peptide. A lipid anchor (N-palmitoyl cysteine) is attached at Cys-18. Cys-18 carries S-diacylglycerol cysteine lipidation. Residues 133-162 (SDKEKKIQEELNQIKAMLRETKRDISKYTC) adopt a coiled-coil conformation.

The protein resides in the cell membrane. This is an uncharacterized protein from Rickettsia conorii (strain ATCC VR-613 / Malish 7).